A 493-amino-acid chain; its full sequence is MRPLCVTCWWLGLLAAMGAVAGQEDGFEGTEEGSPREFIYLNRYKRAGESQDKCTYTFIVPQQRVTGAICVNSKEPEVLLENRVHKQELELLNNELLKQKRQIETLQQLVEVDGGIVSEVKLLRKESRNMNSRVTQLYMQLLHEIIRKRDNALELSQLENRILNQTADMLQLASKYKDLEHKYQHLATLAHNQSEIIAQLEEHCQRVPSARPVPQPPPAAPPRVYQPPTYNRIINQISTNEIQSDQNLKVLPPPLPTMPTLTSLPSSTDKPSGPWRDCLQALEDGHDTSSIYLVKPENTNRLMQVWCDQRHDPGGWTVIQRRLDGSVNFFRNWETYKQGFGNIDGEYWLGLENIYWLTNQGNYKLLVTMEDWSGRKVFAEYASFRLEPESEYYKLRLGRYHGNAGDSFTWHNGKQFTTLDRDHDVYTGNCAHYQKGGWWYNACAHSNLNGVWYRGGHYRSRYQDGVYWAEFRGGSYSLKKVVMMIRPNPNTFH.

Positions 1-22 (MRPLCVTCWWLGLLAAMGAVAG) are cleaved as a signal peptide. Coiled coils occupy residues 76–115 (PEVL…VDGG) and 152–206 (ALEL…HCQR). 2 N-linked (GlcNAc...) asparagine glycosylation sites follow: asparagine 164 and asparagine 192. A Fibrinogen C-terminal domain is found at 269-489 (DKPSGPWRDC…KVVMMIRPNP (221 aa)). 2 cysteine pairs are disulfide-bonded: cysteine 278-cysteine 307 and cysteine 430-cysteine 443.

N-glycosylated. As to expression, widely expressed in heart, small intestine, spleen and stomach. Also found in lower levels in colon, ovary, adrenal gland, skeletal muscle and in prostate.

It localises to the secreted. Its function is as follows. Induces sprouting in endothelial cells through an autocrine and paracrine action. In Homo sapiens (Human), this protein is Angiopoietin-related protein 2 (ANGPTL2).